We begin with the raw amino-acid sequence, 471 residues long: Ribulose bisphosphate carboxylase large chain (471 aa).

Substrate is bound by residues Asn115 and Thr165. Lys167 (proton acceptor) is an active-site residue. Lys169 is a substrate binding site. Mg(2+)-binding residues include Lys193, Asp195, and Glu196. An N6-carboxylysine modification is found at Lys193. The active-site Proton acceptor is the His286. Residues Arg287, His319, and Ser371 each coordinate substrate.

Belongs to the RuBisCO large chain family. Type I subfamily. As to quaternary structure, heterohexadecamer of 8 large chains and 8 small chains. It depends on Mg(2+) as a cofactor.

The protein localises to the carboxysome. The enzyme catalyses 2 (2R)-3-phosphoglycerate + 2 H(+) = D-ribulose 1,5-bisphosphate + CO2 + H2O. It catalyses the reaction D-ribulose 1,5-bisphosphate + O2 = 2-phosphoglycolate + (2R)-3-phosphoglycerate + 2 H(+). RuBisCO catalyzes two reactions: the carboxylation of D-ribulose 1,5-bisphosphate, the primary event in carbon dioxide fixation, as well as the oxidative fragmentation of the pentose substrate in the photorespiration process. Both reactions occur simultaneously and in competition at the same active site. The polypeptide is Ribulose bisphosphate carboxylase large chain (Synechococcus sp. (strain WH7803)).